The following is a 440-amino-acid chain: Doublesex- and mab-3-related transcription factor A2 (440 aa).

A DNA-binding region (DM) is located at residues 59–106 (CARCRNHGVVSALKGHKRYCRWKDCMCAKCTLIAERQRVMAAQVALRR). The segment at 167–261 (PKTPLPGTVT…SPSSAASRQM (95 aa)) is disordered. Basic and acidic residues predominate over residues 199–213 (DMRHGSGSENGDRES). Residues 229–241 (TPGSISPIGSDSG) show a composition bias toward low complexity. Residues 251–261 (PSPSSAASRQM) show a composition bias toward polar residues. Residues 261-296 (MNAIDILTRVFPNHKRSVLELVLQGCGKNVVQAIEQ) form the DMA domain.

It belongs to the DMRT family. As to expression, restrictively expressed in brain and developing germ cells, especially in spermatogonia, spermatocytes, spermatids, and sperm cells, and in developing oocytes, including early perinucleolus stage oocyte, late yolk vesicle stage oocyte, and oil drop stage oocyte.

Its subcellular location is the nucleus. May be involved in sexual development. This is Doublesex- and mab-3-related transcription factor A2 (dmrta2) from Danio rerio (Zebrafish).